Consider the following 2411-residue polypeptide: Polyprotein P1234 (2411 aa).

An Alphavirus-like MT domain is found at Glu30–His257. The tract at residues Gly242 to Thr261 is nsP1 membrane-binding. Residues Cys415 and Cys417 are each lipidated (S-palmitoyl cysteine; by host). The region spanning Glu688 to Lys840 is the (+)RNA virus helicase ATP-binding domain. Position 719 to 726 (Gly719 to Ser726) interacts with a ribonucleoside 5'-triphosphate. Residues Ser841 to Gly989 enclose the (+)RNA virus helicase C-terminal domain. The region spanning Asn1002–Thr1325 is the Peptidase C9 domain. Positions Thr1003 to Thr1022 are nucleolus localization signal. Cys1011 (for cysteine protease nsP2 activity) is an active-site residue. A Nuclear export signal motif is present at residues Thr1056 to Thr1065. His1081 functions as the For cysteine protease nsP2 activity in the catalytic mechanism. The short motif at Pro1180–Ile1184 is the Nuclear localization signal element. The 160-residue stretch at Ala1332–Thr1491 folds into the Macro domain. Asp1341, Asn1355, Gly1363, Gly1443, Ile1444, and Tyr1445 together coordinate ADP-D-ribose. Residues Cys1593, Cys1595, Cys1618, and Cys1636 each coordinate Zn(2+). The disordered stretch occupies residues Asp1681–Lys1720. 2 consecutive short sequence motifs (FGDF; binding to host G3BP1) follow at residues Phe1760 to Phe1763 and Phe1778 to Phe1781. Residues Asp2165–Ala2280 form the RdRp catalytic domain.

Interacts with non-structural protein 3. Interacts with RNA-directed RNA polymerase nsP4. Interacts with protease nsP2. interacts with itself. In terms of assembly, interacts with mRNA-capping enzyme nsP1. Interacts with host DDX1. Interacts with host DDX3. Interacts (via C-terminus) with host G3BP1; this interaction inhibits the formation of host stress granules on viral mRNAs and the nsp3-G3BP1 complexes bind viral RNAs and probably orchestrate the assembly of viral replication complexes. Interacts (via C-terminus) with host G3BP2; this interaction inhibits the formation of host stress granules on viral mRNAs and the nsp3-G3BP2 complexes bind viral RNAs and probably orchestrate the assembly of viral replication complexes. As to quaternary structure, interacts with mRNA-capping enzyme nsP1. Interacts with protease nsP2. interacts with itself. Interacts with RNA-directed RNA polymerase nsP4. Interacts with mRNA-capping enzyme nsP1. Interacts with KPNA1/karyopherin-alpha1; this interaction probably allows the active transport of protease nsP2 into the host nucleus. It depends on Mg(2+) as a cofactor. Mn(2+) is required as a cofactor. Post-translationally, specific enzymatic cleavages in vivo yield mature proteins. The processing of the polyprotein is temporally regulated. In early stages (1.7 hpi), P1234 is first cleaved in trans through its nsP2 protease activity, releasing P123' and nsP4, which associate to form the early replication complex. At the same time, P1234 is also cut at the nsP1/nsP2 site early in infection but with lower efficiency. After replication of the viral minus-strand RNAs (4 hpi), the polyproteins are cut at the nsP1/nsP2 and nsP2/nsP3 sites very efficiently, preventing accumulation of P123' and P1234 and allowing the formation of the late replication complex. NsP3'/nsP4 site is not cleaved anymore and P34 is produced rather than nsP4. In terms of processing, specific enzymatic cleavages in vivo yield mature proteins. The processing of the polyprotein is temporally regulated. In early stages (1.7 hpi), P123 is cleaved at the nsP1/nsP2 site with low efficiency. After replication of the viral minus-strand RNAs (4 hpi), the polyproteins are cut at the nsP1/nsP2 and nsP2/nsP3 sites very efficiently, preventing accumulation of P123 and allowing the formation of the late replication complex. Specific enzymatic cleavages in vivo yield mature proteins. The processing of the polyprotein is temporally regulated. In early stages (1.7 hpi), P123' is cleaved at the nsP1/nsP2 site with low efficiency. After replication of the viral minus-strand RNAs (4 hpi), the polyproteins are cut at the nsP1/nsP2 and nsP2/nsP3 sites very efficiently, preventing accumulation of P123' and allowing the formation of the late replication complex. Post-translationally, palmitoylated by host palmitoyltransferases ZDHHC2 and ZDHHC19. In terms of processing, phosphorylated by host on serines and threonines. Ubiquitinated; targets the protein for rapid degradation via the ubiquitin system. Nsp4 is present in extremely low quantities due to low frequency of translation through the amber stop-codon and the degradation by the ubiquitin pathway.

It localises to the host cytoplasmic vesicle membrane. Its subcellular location is the host cell membrane. The protein localises to the host cell projection. The protein resides in the host filopodium. It is found in the host nucleus. It localises to the host cytoplasm. The catalysed reaction is GTP + S-adenosyl-L-methionine = N(7)-methyl-GTP + S-adenosyl-L-homocysteine. The enzyme catalyses N(7)-methyl-GTP + L-histidyl-[protein] = N(tele)-(N(7)-methylguanosine 5'-phospho)-L-histidyl-[protein] + diphosphate. It carries out the reaction N(tele)-(N(7)-methylguanosine 5'-phospho)-L-histidyl-[protein] + a 5'-end diphospho-(purine-ribonucleoside) in mRNA + H(+) = a 5'-end (N(7)-methyl 5'-triphosphoguanosine)-(purine-ribonucleoside) in mRNA + L-histidyl-[protein]. It catalyses the reaction a 5'-end triphospho-ribonucleoside in mRNA + H2O = a 5'-end diphospho-ribonucleoside in mRNA + phosphate + H(+). The catalysed reaction is a ribonucleoside 5'-triphosphate + H2O = a ribonucleoside 5'-diphosphate + phosphate + H(+). The enzyme catalyses ATP + H2O = ADP + phosphate + H(+). It carries out the reaction RNA(n) + a ribonucleoside 5'-triphosphate = RNA(n+1) + diphosphate. It catalyses the reaction RNA(n) + ATP = RNA(n)-3'-adenine ribonucleotide + diphosphate. The catalysed reaction is 4-O-(ADP-D-ribosyl)-L-aspartyl-[protein] + H2O = L-aspartyl-[protein] + ADP-D-ribose + H(+). The enzyme catalyses 5-O-(ADP-D-ribosyl)-L-glutamyl-[protein] + H2O = L-glutamyl-[protein] + ADP-D-ribose + H(+). It carries out the reaction ADP-alpha-D-ribose 1''-phosphate + H2O = ADP-D-ribose + phosphate. Inactive precursor of the viral replicase, which is activated by cleavages carried out by the viral protease nsP2. In terms of biological role, the early replication complex formed by the polyprotein P123 and nsP4 synthesizes minus-strand RNAs. As soon P123 is cleaved into mature proteins, the plus-strand RNAs synthesis begins. Functionally, the early replication complex formed by the polyprotein P123' and nsP4 synthesizes minus-strand RNAs. Polyprotein P123' is a short-lived polyprotein that accumulates during early stage of infection. As soon P123' is cleaved into mature proteins, the plus-strand RNAs synthesis begins. Its function is as follows. Cytoplasmic capping enzyme that catalyzes two virus-specific reactions: methyltransferase and nsP1 guanylyltransferase. mRNA-capping is necessary since all viral RNAs are synthesized in the cytoplasm, and host capping enzymes are restricted to the nucleus. The enzymatic reaction involves a covalent link between 7-methyl-GMP and nsP1, whereas eukaryotic capping enzymes form a covalent complex only with GMP. nsP1 capping consists in the following reactions: GTP is first methylated into 7-methyl-GMP and then is covalently linked to nsP1 to form the m7GMp-nsP1 complex from which 7-methyl-GMP complex is transferred to the mRNA to create the cap structure. NsP1 is needed for the initiation of the minus-strand RNAs synthesis. Probably serves as a membrane anchor for the replication complex composed of nsP1-nsP4. Palmitoylated nsP1 is remodeling host cell cytoskeleton, and induces filopodium-like structure formation at the surface of the host cell. Multifunctional protein whose N-terminus is part of the RNA polymerase complex and displays NTPase, RNA triphosphatase and helicase activities. NTPase and RNA triphosphatase are involved in viral RNA capping and helicase keeps a check on the dsRNA replication intermediates. The C-terminus harbors a protease that specifically cleaves the polyproteins and releases the mature proteins. Required for the shutoff of minus-strand RNAs synthesis. Specifically inhibits the host IFN response by promoting the nuclear export of host STAT1. Also inhibits host transcription by inducing rapid proteasome-dependent degradation of POLR2A, a catalytic subunit of the RNAPII complex. The resulting inhibition of cellular protein synthesis serves to ensure maximal viral gene expression and to evade host immune response. In terms of biological role, seems to be essential for minus-strand RNAs and subgenomic 26S mRNAs synthesis. Displays mono-ADP-ribosylhydrolase activity. ADP-ribosylation is a post-translational modification that controls various processes of the host cell and the virus probably needs to revert it for optimal viral replication. Binds proteins of FXR family and sequesters them into the viral RNA replication complexes thereby inhibiting the formation of host stress granules on viral mRNAs. The nsp3-FXR complexes bind viral RNAs and probably orchestrate the assembly of viral replication complexes, thanks to the ability of FXR family members to self-assemble and bind DNA. Functionally, seems to be essential for minus-strand RNAs and subgenomic 26S mRNAs synthesis. Displays mono-ADP-ribosylhydrolase activity. ADP-ribosylation is a post-translantional modification that controls various processes of the host cell and the virus probably needs to revert it for optimal viral replication. Binds proteins of G3BP family and sequesters them into the viral RNA replication complexes thereby inhibiting the formation of host stress granules on viral mRNAs. The nsp3'-G3BP complexes bind viral RNAs and probably orchestrate the assembly of viral replication complexes, thanks to the ability of G3BP family members to self-assemble and bind DNA. Its function is as follows. RNA dependent RNA polymerase. Replicates genomic and antigenomic RNA by recognizing replications specific signals. The early replication complex formed by the polyprotein P123 and nsP4 synthesizes minus-strand RNAs. The late replication complex composed of fully processed nsP1-nsP4 is responsible for the production of genomic and subgenomic plus-strand RNAs. The core catalytic domain of nsP4 also possesses terminal adenylyltransferase (TATase) activity that is probably involved in maintenance and repair of the poly(A) tail, an element required for replication of the viral genome. The protein is Polyprotein P1234 of Barmah forest virus (BFV).